Consider the following 172-residue polypeptide: MDRTAKADLVSTLNGVFTTNAVVVVAHYKGLTVADMQKLRSQMKQAGATVKVAKNRLASIALDGTDVASIKPLLKGPTLLAYSSDPVAAAKVAVDFAKTNDKLVILGGAMGTTALNPDGVKALATLPSLDELRAKLVGLIQAPATKVAQVVNAPAAKLARVFGAYAKKDEAA.

Belongs to the universal ribosomal protein uL10 family. Part of the ribosomal stalk of the 50S ribosomal subunit. The N-terminus interacts with L11 and the large rRNA to form the base of the stalk. The C-terminus forms an elongated spine to which L12 dimers bind in a sequential fashion forming a multimeric L10(L12)X complex.

Functionally, forms part of the ribosomal stalk, playing a central role in the interaction of the ribosome with GTP-bound translation factors. This chain is Large ribosomal subunit protein uL10, found in Methylorubrum populi (strain ATCC BAA-705 / NCIMB 13946 / BJ001) (Methylobacterium populi).